The following is a 991-amino-acid chain: Bone morphogenetic protein 1 (991 aa).

Positions 1–25 are cleaved as a signal peptide; sequence MPGVARPPLPLLSLPLLLLLLLLPR. Positions 26–125 are excised as a propeptide; the sequence is AGRPLDLADY…RWRGRPRSRR (100 aa). The segment at 86 to 131 is disordered; the sequence is ARRPSIKAAGNSSALGGQGTSGQPQRESRGRWRGRPRSRRAATSRP. The span at 95–110 shows a compositional bias: polar residues; the sequence is GNSSALGGQGTSGQPQ. N96 is a glycosylation site (N-linked (GlcNAc...) asparagine). Positions 116-127 are enriched in basic residues; the sequence is RWRGRPRSRRAA. The Peptidase M12A domain maps to 126–325; it reads AATSRPERVW…AQARKLYKCP (200 aa). An N-linked (GlcNAc...) asparagine glycan is attached at N147. Intrachain disulfides connect C168-C324, C188-C210, C190-C191, and C327-C353. Residue H218 coordinates Zn(2+). E219 is a catalytic residue. Zn(2+) is bound by residues H222 and H228. CUB domains lie at 327–439 and 440–551; these read CGET…YEAI and CGGD…NFFK. N-linked (GlcNAc...) asparagine glycosylation is found at N337 and N368. Cystine bridges form between C380/C402, C440/C466, C493/C515, C556/C568, C564/C577, C579/C592, C596/C622, C649/C671, C712/C723, C719/C732, C734/C747, C752/C778, C805/C827, C865/C895, and C922/C944. The region spanning 552-593 is the EGF-like 1; calcium-binding domain; that stretch reads EVDECSRPNRGGCEQRCLNTLGSYKCSCDPGYELAPDKRRCE. The region spanning 596–707 is the CUB 3 domain; it reads CGGFLTKLNG…KKGFKAHFFS (112 aa). An N-linked (GlcNAc...) asparagine glycan is attached at N604. The 41-residue stretch at 708 to 748 folds into the EGF-like 2; calcium-binding domain; the sequence is DKDECSKDNGGCQQDCVNTFGSYECQCRSGFVLHDNKHDCK. CUB domains lie at 752–864 and 865–981; these read CEHK…HSTE and CGGQ…YTST. Omega-N-methylarginine is present on residues R939 and R942.

Interacts with POSTN, the interaction promotes deposition on the extracellular matrix. Requires Zn(2+) as cofactor. In terms of tissue distribution, at high levels in embryonic maternal deciduum and floor plate region of the neural tube. Less in developing membranous and endochondral bone, submucosa of intestine, dermis of skin and the mesenchyme of spleen and lung.

The protein localises to the golgi apparatus. It localises to the trans-Golgi network. It is found in the secreted. The protein resides in the extracellular space. Its subcellular location is the extracellular matrix. The enzyme catalyses Cleavage of the C-terminal propeptide at Ala-|-Asp in type I and II procollagens and at Arg-|-Asp in type III.. With respect to regulation, activity is increased by the procollagen C-endopeptidase enhancer protein. Its function is as follows. Metalloprotease that plays key roles in regulating the formation of the extracellular matrix (ECM) via processing of various precursor proteins into mature functional enzymes or structural proteins. Thereby participates in several developmental and physiological processes such as cartilage and bone formation, muscle growth and homeostasis, wound healing and tissue repair. Roles in ECM formation include cleavage of the C-terminal propeptides from procollagens such as procollagen I, II and III or the proteolytic activation of the enzyme lysyl oxidase LOX, necessary to formation of covalent cross-links in collagen and elastic fibers. Additional substrates include matricellular thrombospondin-1/THBS1 whose cleavage leads to cell adhesion disruption and TGF-beta activation. The polypeptide is Bone morphogenetic protein 1 (Bmp1) (Mus musculus (Mouse)).